The following is a 549-amino-acid chain: Cation/acetate symporter ActP (549 aa).

The next 13 membrane-spanning stretches (helical) occupy residues 33-53 (WQAI…TYWA), 77-97 (LAIA…ALVF), 103-123 (GLIY…LIAE), 148-168 (ILSA…QMVG), 183-203 (IAVV…GMLA), 206-226 (WVQI…AFMV), 262-282 (ISAL…PHIL), 303-323 (GFMG…IMLV), 355-375 (LFLG…VAGL), 404-424 (VSKI…VLFE), 428-448 (IAFM…PIIL), 464-484 (GGWL…TIWV), and 493-513 (IFPY…GIWL).

This sequence belongs to the sodium:solute symporter (SSF) (TC 2.A.21) family.

The protein resides in the cell inner membrane. In terms of biological role, transports acetate. This is Cation/acetate symporter ActP from Escherichia coli O1:K1 / APEC.